Consider the following 580-residue polypeptide: Negative elongation factor B (580 aa).

Lysine 519 carries the post-translational modification N6-acetyllysine. Residues 552-580 (DHRKPSPTQAAETPALDLPLPSVPAPATL) form a disordered region. Residue serine 557 is modified to Phosphoserine.

The protein belongs to the NELF-B family. As to quaternary structure, the NELF complex is composed of NELFA, NELFB, NELFCD and NELFE; the N-terminus of NELFB binds to the NELFA:NELFCD subcomplex. Binds RNA which may help to stabilize the NELF complex on nucleic acid Interacts with the first BRCT repeat of BRCA1. Interacts with KIAA1191. Isoform 1 and isoform 2 interact with NELFA, NELFCD and NELFE. As to expression, isoform 1 is expressed in the kidney, liver, adipose and lung. Isoform 2 is widely expressed.

The protein resides in the nucleus. Essential component of the NELF complex, a complex that negatively regulates the elongation of transcription by RNA polymerase II (Pol II). The NELF complex, which acts via an association with the DSIF complex and causes transcriptional pausing, is counteracted by the P-TEFb kinase complex. May be able to induce chromatin unfolding. Essential for early embryogenesis; plays an important role in maintaining the undifferentiated state of embryonic stem cells (ESCs) by preventing unscheduled expression of developmental genes. Plays a key role in establishing the responsiveness of stem cells to developmental cues; facilitates plasticity and cell fate commitment in ESCs by establishing the appropriate expression level of signaling molecules. Supports the transcription of genes involved in energy metabolism in cardiomyocytes; facilitates the association of transcription initiation factors with the promoters of the metabolism-related genes. This chain is Negative elongation factor B (Nelfb), found in Mus musculus (Mouse).